The sequence spans 359 residues: GDSL esterase/lipase At5g03610 (359 aa).

A signal peptide spans 1–22; sequence MDSLIKLFFCLFIFLCTSLLFG. S50 serves as the catalytic Nucleophile. Residues N136, N236, and N259 are each glycosylated (N-linked (GlcNAc...) asparagine). Residues D332 and H335 contribute to the active site.

Belongs to the 'GDSL' lipolytic enzyme family.

It localises to the secreted. This is GDSL esterase/lipase At5g03610 from Arabidopsis thaliana (Mouse-ear cress).